The primary structure comprises 167 residues: Menaquinol:cytochrome c reductase iron-sulfur subunit (167 aa).

The Rieske domain occupies 59-158; sequence TKEPQRFDFK…QEVKDGFLYL (100 aa). [2Fe-2S] cluster contacts are provided by cysteine 100, histidine 102, cysteine 121, and histidine 124. Cysteine 105 and cysteine 123 are joined by a disulfide.

This sequence belongs to the Rieske iron-sulfur protein family. The main subunits of the menaquinol:cytochrome c complex are a Rieske-type iron-sulfur protein (QcrA), a cytochrome b (QcrB) and a cytochrome c (QcrC). Requires [2Fe-2S] cluster as cofactor.

In terms of biological role, component of the menaquinol:cytochrome c reductase complex. The Rieske protein is a high potential 2Fe-2S protein. This chain is Menaquinol:cytochrome c reductase iron-sulfur subunit (qcrA), found in Bacillus subtilis (strain 168).